The sequence spans 640 residues: LRR receptor kinase SERL2 (640 aa).

The signal sequence occupies residues 1–22 (MEPPFFLLLLLLVVSSSSPSAA). Residues 23 to 241 (LLSAKGVNNE…AARDRGHKFA (219 aa)) are Extracellular-facing. Residues Asn-94 and Asn-107 are each glycosylated (N-linked (GlcNAc...) asparagine). LRR repeat units follow at residues 95–119 (LTNL…IGRL), 120–143 (ENLK…VGHL), 145–167 (SLQY…SANL), and 168–191 (SHLV…LART). N-linked (GlcNAc...) asparagine glycosylation is found at Asn-153, Asn-166, Asn-179, and Asn-222. A helical transmembrane segment spans residues 242–262 (VAFGSTAGCMGLLLLAAGFLF). Topologically, residues 263–640 (WWRHRRNRQI…VQAVELSGPR (378 aa)) are cytoplasmic. The 280-residue stretch at 304–583 (FSGKNILGKG…EGDGLADRWE (280 aa)) folds into the Protein kinase domain. Residues 310-318 (LGKGGFGNV) and Lys-332 contribute to the ATP site. Asp-427 functions as the Proton acceptor in the catalytic mechanism.

Belongs to the protein kinase superfamily. Ser/Thr protein kinase family. Interacts with MSBP1.

It localises to the cell membrane. It carries out the reaction L-seryl-[protein] + ATP = O-phospho-L-seryl-[protein] + ADP + H(+). The catalysed reaction is L-threonyl-[protein] + ATP = O-phospho-L-threonyl-[protein] + ADP + H(+). In terms of biological role, LRR receptor kinase that may be involved in defense response. In Oryza sativa subsp. japonica (Rice), this protein is LRR receptor kinase SERL2.